An 886-amino-acid chain; its full sequence is Alanine--tRNA ligase (886 aa).

Positions 570, 574, 673, and 677 each coordinate Zn(2+).

Belongs to the class-II aminoacyl-tRNA synthetase family. Zn(2+) serves as cofactor.

It localises to the cytoplasm. It carries out the reaction tRNA(Ala) + L-alanine + ATP = L-alanyl-tRNA(Ala) + AMP + diphosphate. Catalyzes the attachment of alanine to tRNA(Ala) in a two-step reaction: alanine is first activated by ATP to form Ala-AMP and then transferred to the acceptor end of tRNA(Ala). Also edits incorrectly charged Ser-tRNA(Ala) and Gly-tRNA(Ala) via its editing domain. In Chlorobium chlorochromatii (strain CaD3), this protein is Alanine--tRNA ligase.